Consider the following 244-residue polypeptide: Lipoprotein-releasing system ATP-binding protein LolD (244 aa).

An ABC transporter domain is found at 19-244; the sequence is IRAEALAKTY…KLRELAPSAV (226 aa). 55-62 serves as a coordination point for ATP; that stretch reads GASGAGKS.

The protein belongs to the ABC transporter superfamily. Lipoprotein translocase (TC 3.A.1.125) family. The complex is composed of two ATP-binding proteins (LolD) and two transmembrane proteins (LolC and LolE).

The protein localises to the cell inner membrane. In terms of biological role, part of the ABC transporter complex LolCDE involved in the translocation of mature outer membrane-directed lipoproteins, from the inner membrane to the periplasmic chaperone, LolA. Responsible for the formation of the LolA-lipoprotein complex in an ATP-dependent manner. The polypeptide is Lipoprotein-releasing system ATP-binding protein LolD (Xanthomonas euvesicatoria pv. vesicatoria (strain 85-10) (Xanthomonas campestris pv. vesicatoria)).